The primary structure comprises 804 residues: Phenylalanine--tRNA ligase beta subunit (804 aa).

In terms of domain architecture, tRNA-binding spans 38-148 (RAAFRAFTIA…ENAPVGTSFA (111 aa)). A B5 domain is found at 401–476 (HTARVIDFPV…RIHGINRIDP (76 aa)). Residues aspartate 454, aspartate 460, glutamate 463, and glutamate 464 each contribute to the Mg(2+) site. One can recognise an FDX-ACB domain in the interval 710 to 803 (SLFQSLKRDY…VAKQTGGVLR (94 aa)).

This sequence belongs to the phenylalanyl-tRNA synthetase beta subunit family. Type 1 subfamily. In terms of assembly, tetramer of two alpha and two beta subunits. The cofactor is Mg(2+).

It localises to the cytoplasm. The enzyme catalyses tRNA(Phe) + L-phenylalanine + ATP = L-phenylalanyl-tRNA(Phe) + AMP + diphosphate + H(+). The chain is Phenylalanine--tRNA ligase beta subunit from Brucella suis biovar 1 (strain 1330).